The chain runs to 698 residues: Elongation factor G (698 aa).

A tr-type G domain is found at 11–291 (THFRNIGIAA…AVVDYLPSPL (281 aa)). Residues 20-27 (AHIDAGKT), 90-94 (DTPGH), and 144-147 (NKMD) contribute to the GTP site.

Belongs to the TRAFAC class translation factor GTPase superfamily. Classic translation factor GTPase family. EF-G/EF-2 subfamily.

Its subcellular location is the cytoplasm. Functionally, catalyzes the GTP-dependent ribosomal translocation step during translation elongation. During this step, the ribosome changes from the pre-translocational (PRE) to the post-translocational (POST) state as the newly formed A-site-bound peptidyl-tRNA and P-site-bound deacylated tRNA move to the P and E sites, respectively. Catalyzes the coordinated movement of the two tRNA molecules, the mRNA and conformational changes in the ribosome. The protein is Elongation factor G of Deinococcus radiodurans (strain ATCC 13939 / DSM 20539 / JCM 16871 / CCUG 27074 / LMG 4051 / NBRC 15346 / NCIMB 9279 / VKM B-1422 / R1).